A 302-amino-acid chain; its full sequence is MKLLLSAGAALAFVLGLCAAGSPPAQLSVHTVSWNSGHERAPTNLEELLGLNSGETPDVIAVAVQGFGFQTDKPQQGPACVKNFQSLLTSKGYTKLKNTITETMGLTVYCLEKHLDQNTLKNETIIVTVDDQKKSGGIVTSFTIYNKRFSFTTSRMSDEDVTSTNTKYAYDTRLDYSKKDDPSDFLFWIGDLNVRVETNATHAKSLVDQNNIDGLMAFDQLKKAKEQKLFDGWTEPQVTFKPTYKFKPNTDEYDLSATPSWTDRALYKSGTGKTIQPLSYNSLTNYKQTEHRPVLAKFRVTL.

The signal sequence occupies residues 1-20; the sequence is MKLLLSAGAALAFVLGLCAA. Cys-80 serves as a coordination point for heme.

It depends on heme b as a cofactor. Post-translationally, the N-terminus is blocked. As to expression, expressed in salivary glands.

The protein resides in the secreted. Heme-based protein that delivers nitric oxide gas (NO) to the victim while feeding, resulting in vasodilation. In place of heme, the heme-binding cysteine can also reversibly bind NO when it is present in high concentrations. The sequence is that of Nitrophorin Cim l NP from Cimex lectularius (Bed bug).